Reading from the N-terminus, the 602-residue chain is Elongation factor 4 (602 aa).

One can recognise a tr-type G domain in the interval 7–188; sequence ENIRNFSIIA…AIVELIPPPK (182 aa). GTP-binding positions include 19-24 and 135-138; these read DHGKST and NKID.

It belongs to the TRAFAC class translation factor GTPase superfamily. Classic translation factor GTPase family. LepA subfamily.

It localises to the cell inner membrane. It carries out the reaction GTP + H2O = GDP + phosphate + H(+). In terms of biological role, required for accurate and efficient protein synthesis under certain stress conditions. May act as a fidelity factor of the translation reaction, by catalyzing a one-codon backward translocation of tRNAs on improperly translocated ribosomes. Back-translocation proceeds from a post-translocation (POST) complex to a pre-translocation (PRE) complex, thus giving elongation factor G a second chance to translocate the tRNAs correctly. Binds to ribosomes in a GTP-dependent manner. This Chlamydia abortus (strain DSM 27085 / S26/3) (Chlamydophila abortus) protein is Elongation factor 4.